A 138-amino-acid polypeptide reads, in one-letter code: Phospholipase A2 homolog mojave toxin acidic chain (138 aa).

The first 40 residues, 1 to 40 (MRALWIVAVLLVGVEGSLVEFETLIMKIAGRSGISYYSSY), serve as a signal peptide directing secretion. 7 cysteine pairs are disulfide-bonded: Cys-42–Cys-131, Cys-44–Cys-60, Cys-59–Cys-111, Cys-65–Cys-138, Cys-66–Cys-104, Cys-73–Cys-97, and Cys-91–Cys-102. Residues 81-83 (TYR) constitute a propeptide that is removed on maturation. Residue Gln-84 is modified to Pyrrolidone carboxylic acid. A propeptide spanning residues 120–126 (DYKYLRF) is cleaved from the precursor.

The protein belongs to the phospholipase A2 family. Group II subfamily. D49 sub-subfamily. Heterodimer of an acidic and a basic chain. The acidic subunit is non-toxic, without enzymatic activity and comprises 3 peptides that are cross-linked by 5 disulfide bridges. The basic subunit is toxic, has phospholipase A2 activity and is composed of a single chain. It depends on Ca(2+) as a cofactor. In terms of tissue distribution, expressed by the venom gland.

It is found in the secreted. In terms of biological role, snake venom phospholipase A2 (PLA2) that inhibits neuromuscular transmission by blocking acetylcholine release from the nerve termini. This Crotalus scutulatus scutulatus (Mojave rattlesnake) protein is Phospholipase A2 homolog mojave toxin acidic chain.